A 367-amino-acid chain; its full sequence is MDSSLAQEIAAIDGVELDSEVTFADLTTLRIGGKPRSAVRCQTTEALVSAIKLLDDASLPLLIVGGGSNLVVADGDLDVIAVIIETDDVSINLTDGLLTADAGAVWDDVVHLSVDAGLGGIECLSGIPGSAGATPVQNVGAYGTEVSDVLTRVQLLDRTTHQVSWVDASELDLSYRYSNLKFTNRAVVLAIELQLLTDGLSAPLRFGELGRRLAISEAEPHPRRPVRMVRDAVLELRRAKGMVVEHTDHDTWSAGSFFTNPIVDPALADAVFEKVGEPTMPRFPAGDGKEKLSAAWLIERAGFKKGHPGAGAKASLSTKHTLALTNRGDARASDLVALAKEIRDGVLETFGVTLVPEPVWIGISIDD.

Positions 31-198 constitute an FAD-binding PCMH-type domain; that stretch reads IGGKPRSAVR…LAIELQLLTD (168 aa). Arg-176 is an active-site residue. Catalysis depends on Ser-256, which acts as the Proton donor. Residue Glu-357 is part of the active site.

Belongs to the MurB family. FAD is required as a cofactor.

The protein resides in the cytoplasm. The enzyme catalyses UDP-N-acetyl-alpha-D-muramate + NADP(+) = UDP-N-acetyl-3-O-(1-carboxyvinyl)-alpha-D-glucosamine + NADPH + H(+). The protein operates within cell wall biogenesis; peptidoglycan biosynthesis. Cell wall formation. The protein is UDP-N-acetylenolpyruvoylglucosamine reductase 2 (murB2) of Corynebacterium glutamicum (strain ATCC 13032 / DSM 20300 / JCM 1318 / BCRC 11384 / CCUG 27702 / LMG 3730 / NBRC 12168 / NCIMB 10025 / NRRL B-2784 / 534).